The primary structure comprises 98 residues: NADH-ubiquinone oxidoreductase chain 4L (98 aa).

3 helical membrane passes run 1–21, 29–49, and 61–81; these read MSLVYMNIMMAFTVSLTGLLM, SLLCLEGMMLSLFILATLMIL, and IILLVFAACEAALGLSLLVMV.

This sequence belongs to the complex I subunit 4L family. Core subunit of respiratory chain NADH dehydrogenase (Complex I) which is composed of 45 different subunits.

The protein resides in the mitochondrion inner membrane. It catalyses the reaction a ubiquinone + NADH + 5 H(+)(in) = a ubiquinol + NAD(+) + 4 H(+)(out). Its function is as follows. Core subunit of the mitochondrial membrane respiratory chain NADH dehydrogenase (Complex I) which catalyzes electron transfer from NADH through the respiratory chain, using ubiquinone as an electron acceptor. Part of the enzyme membrane arm which is embedded in the lipid bilayer and involved in proton translocation. This is NADH-ubiquinone oxidoreductase chain 4L (MT-ND4L) from Ovis aries (Sheep).